Here is a 115-residue protein sequence, read N- to C-terminus: Immunoglobulin kappa variable 5-2 (115 aa).

The first 20 residues, 1 to 20 (MGSQVHLLSFLLLWISDTRA), serve as a signal peptide directing secretion. A framework-1 region spans residues 21-43 (ETTLTQSPAFMSATPGDKVNISC). The region spanning 22–115 (TTLTQSPAFM…YFCLQHDNFP (94 aa)) is the Ig-like domain. A glycan (N-linked (GlcNAc...) asparagine) is linked at N40. S42 carries the phosphoserine modification. Residues C43 and C108 are joined by a disulfide bond. Residues 44–54 (KASQDIDDDMN) form a complementarity-determining-1 region. The tract at residues 55–69 (WYQQKPGEAAIFIIQ) is framework-2. Positions 70-76 (EATTLVP) are complementarity-determining-2. The framework-3 stretch occupies residues 77-108 (GIPPRFSGSGYGTDFTLTINNIESEDAAYYFC). The segment at 109–115 (LQHDNFP) is complementarity-determining-3.

As to quaternary structure, immunoglobulins are composed of two identical heavy chains and two identical light chains; disulfide-linked.

It localises to the secreted. Its subcellular location is the cell membrane. V region of the variable domain of immunoglobulin light chains that participates in the antigen recognition. Immunoglobulins, also known as antibodies, are membrane-bound or secreted glycoproteins produced by B lymphocytes. In the recognition phase of humoral immunity, the membrane-bound immunoglobulins serve as receptors which, upon binding of a specific antigen, trigger the clonal expansion and differentiation of B lymphocytes into immunoglobulins-secreting plasma cells. Secreted immunoglobulins mediate the effector phase of humoral immunity, which results in the elimination of bound antigens. The antigen binding site is formed by the variable domain of one heavy chain, together with that of its associated light chain. Thus, each immunoglobulin has two antigen binding sites with remarkable affinity for a particular antigen. The variable domains are assembled by a process called V-(D)-J rearrangement and can then be subjected to somatic hypermutations which, after exposure to antigen and selection, allow affinity maturation for a particular antigen. The sequence is that of Immunoglobulin kappa variable 5-2 from Homo sapiens (Human).